Consider the following 247-residue polypeptide: tRNA pseudouridine synthase A (247 aa).

The active-site Nucleophile is Asp-52. Tyr-111 is a substrate binding site.

The protein belongs to the tRNA pseudouridine synthase TruA family. As to quaternary structure, homodimer.

It carries out the reaction uridine(38/39/40) in tRNA = pseudouridine(38/39/40) in tRNA. In terms of biological role, formation of pseudouridine at positions 38, 39 and 40 in the anticodon stem and loop of transfer RNAs. The sequence is that of tRNA pseudouridine synthase A from Erythrobacter litoralis (strain HTCC2594).